The chain runs to 243 residues: 1-(5-phosphoribosyl)-5-[(5-phosphoribosylamino)methylideneamino] imidazole-4-carboxamide isomerase (243 aa).

The active-site Proton acceptor is the D8. D129 functions as the Proton donor in the catalytic mechanism.

This sequence belongs to the HisA/HisF family.

The protein resides in the cytoplasm. It carries out the reaction 1-(5-phospho-beta-D-ribosyl)-5-[(5-phospho-beta-D-ribosylamino)methylideneamino]imidazole-4-carboxamide = 5-[(5-phospho-1-deoxy-D-ribulos-1-ylimino)methylamino]-1-(5-phospho-beta-D-ribosyl)imidazole-4-carboxamide. The protein operates within amino-acid biosynthesis; L-histidine biosynthesis; L-histidine from 5-phospho-alpha-D-ribose 1-diphosphate: step 4/9. The sequence is that of 1-(5-phosphoribosyl)-5-[(5-phosphoribosylamino)methylideneamino] imidazole-4-carboxamide isomerase from Brucella suis biovar 1 (strain 1330).